The following is a 209-amino-acid chain: Ribonuclease HII (209 aa).

In terms of domain architecture, RNase H type-2 spans 20–209; it reads GLVAGVDEAG…VARSLPGACR (190 aa). 3 residues coordinate a divalent metal cation: Asp-26, Glu-27, and Asp-118.

Belongs to the RNase HII family. Mn(2+) serves as cofactor. The cofactor is Mg(2+).

It is found in the cytoplasm. The catalysed reaction is Endonucleolytic cleavage to 5'-phosphomonoester.. Its function is as follows. Endonuclease that specifically degrades the RNA of RNA-DNA hybrids. This chain is Ribonuclease HII, found in Verminephrobacter eiseniae (strain EF01-2).